The sequence spans 420 residues: Tyrosine-protein phosphatase non-receptor type 20 (420 aa).

Residues 1 to 11 are compositionally biased toward basic and acidic residues; it reads MSSPRDFRAEP. 2 disordered regions span residues 1–47 and 68–108; these read MSSP…VFEN and DVFE…SQAL. Residues 31 to 41 are compositionally biased toward polar residues; it reads LPSSSQENTPR. Ser-76 and Ser-120 each carry phosphoserine. Residues 159–412 form the Tyrosine-protein phosphatase domain; the sequence is IMQEFMALEL…HFCYDIVLEV (254 aa). Residues Asp-323, 353-359, and Gln-397 contribute to the substrate site; that span reads CSAGIGR. Residue Cys-353 is the Phosphocysteine intermediate of the active site.

This sequence belongs to the protein-tyrosine phosphatase family. Non-receptor class subfamily. Present in many cell lines (at protein level). Widely expressed.

It is found in the nucleus. The protein resides in the cytoplasm. The protein localises to the cytoskeleton. Its subcellular location is the microtubule organizing center. It localises to the centrosome. It carries out the reaction O-phospho-L-tyrosyl-[protein] + H2O = L-tyrosyl-[protein] + phosphate. Its function is as follows. Tyrosine-protein phosphatase targeted to sites of actin polymerization in response of varied extracellular stimuli. Has tyrosine phosphatase activity towards various tyrosyl phosphorylated substrates. This Homo sapiens (Human) protein is Tyrosine-protein phosphatase non-receptor type 20.